The following is a 215-amino-acid chain: Nuclear autoantigen Sp-100 (215 aa).

Positions 1-31 constitute an SAND domain; it reads EGDRGASKNWKLSIRCGGYTLKVLTENKFLP. DNA-binding regions (HMG box) lie at residues 32–108 and 124–192; these read EPPS…KTYI and PKRP…AACR. The short motif at 72-89 is the Nuclear localization signal element; it reads KKRSEMWKTIFAKEKGKF. 2 disordered regions span residues 104–124 and 193–215; these read MKTY…PNAP and AKGK…KKKE.

As to quaternary structure, homodimer. Interacts with members of the HP1 family of nonhistone chromosomal protein, such as CBX5 and CBX3 via the PxVxL motif. Interacts with ETS1; the interaction is direct and modulates ETS1 transcriptional activity. Interacts with the MRN complex which is composed of two heterodimers RAD50/MRE11 associated with a single NBN; recruits the complex to PML-related bodies. Interacts with HIPK2; positively regulates TP53-dependent transcription. Interacts with CASP8AP2; may negatively regulate CASP8AP2 export from the nucleus to the cytoplasm. Post-translationally, phosphorylated. In terms of processing, sumoylated. Sumoylated with SUMO1. Sumoylation depends on a functional nuclear localization signal but is not necessary for nuclear import or nuclear body targeting. Sumoylation may stabilize the interaction with CBX5.

It localises to the nucleus. The protein localises to the PML body. The protein resides in the nuclear body. Its subcellular location is the cytoplasm. In terms of biological role, together with PML, this tumor suppressor is a major constituent of the PML bodies, a subnuclear organelle involved in a large number of physiological processes including cell growth, differentiation and apoptosis. Functions as a transcriptional coactivator of ETS1 and ETS2. Under certain conditions, it may also act as a corepressor of ETS1 preventing its binding to DNA. Through the regulation of ETS1 it may play a role in angiogenesis, controlling endothelial cell motility and invasion. Through interaction with the MRN complex it may be involved in the regulation of telomeres lengthening. May also regulate TP53-mediated transcription and through CASP8AP2, regulate FAS-mediated apoptosis. May also play a role in infection by viruses through mechanisms that may involve chromatin and/or transcriptional regulation. This chain is Nuclear autoantigen Sp-100 (SP100), found in Pan troglodytes (Chimpanzee).